We begin with the raw amino-acid sequence, 240 residues long: Uridylate kinase (240 aa).

Residue Lys-12 to Gly-15 participates in ATP binding. The tract at residues Gly-20–Gly-25 is involved in allosteric activation by GTP. Gly-54 provides a ligand contact to UMP. Residues Gly-55 and Arg-59 each coordinate ATP. UMP contacts are provided by residues Asp-74 and Thr-135–Thr-142. ATP contacts are provided by Asn-163, Tyr-169, and Asp-172.

It belongs to the UMP kinase family. As to quaternary structure, homohexamer.

It localises to the cytoplasm. It catalyses the reaction UMP + ATP = UDP + ADP. The protein operates within pyrimidine metabolism; CTP biosynthesis via de novo pathway; UDP from UMP (UMPK route): step 1/1. Its activity is regulated as follows. Allosterically activated by GTP. Inhibited by UTP. In terms of biological role, catalyzes the reversible phosphorylation of UMP to UDP. This Bacillus anthracis protein is Uridylate kinase.